We begin with the raw amino-acid sequence, 375 residues long: 23S rRNA (uracil(747)-C(5))-methyltransferase RlmC (375 aa).

[4Fe-4S] cluster is bound by residues cysteine 3, cysteine 11, cysteine 14, and cysteine 87. S-adenosyl-L-methionine-binding residues include glutamine 212, phenylalanine 241, glutamate 262, and asparagine 307. The Nucleophile role is filled by cysteine 334.

The protein belongs to the class I-like SAM-binding methyltransferase superfamily. RNA M5U methyltransferase family. RlmC subfamily.

The enzyme catalyses uridine(747) in 23S rRNA + S-adenosyl-L-methionine = 5-methyluridine(747) in 23S rRNA + S-adenosyl-L-homocysteine + H(+). Its function is as follows. Catalyzes the formation of 5-methyl-uridine at position 747 (m5U747) in 23S rRNA. This is 23S rRNA (uracil(747)-C(5))-methyltransferase RlmC from Escherichia coli O157:H7.